Here is a 624-residue protein sequence, read N- to C-terminus: Phosphomethylpyrimidine synthase (624 aa).

Residues Asn231, Met260, Tyr289, His325, Ser345–Gly347, Asp386–Arg389, and Glu425 contribute to the substrate site. His429 serves as a coordination point for Zn(2+). Residue Tyr452 participates in substrate binding. His493 is a binding site for Zn(2+). Cys573, Cys576, and Cys581 together coordinate [4Fe-4S] cluster.

This sequence belongs to the ThiC family. In terms of assembly, homodimer. Requires [4Fe-4S] cluster as cofactor.

The enzyme catalyses 5-amino-1-(5-phospho-beta-D-ribosyl)imidazole + S-adenosyl-L-methionine = 4-amino-2-methyl-5-(phosphooxymethyl)pyrimidine + CO + 5'-deoxyadenosine + formate + L-methionine + 3 H(+). It functions in the pathway cofactor biosynthesis; thiamine diphosphate biosynthesis. Catalyzes the synthesis of the hydroxymethylpyrimidine phosphate (HMP-P) moiety of thiamine from aminoimidazole ribotide (AIR) in a radical S-adenosyl-L-methionine (SAM)-dependent reaction. This chain is Phosphomethylpyrimidine synthase, found in Myxococcus xanthus (strain DK1622).